A 271-amino-acid polypeptide reads, in one-letter code: Hydroxyethylthiazole kinase (271 aa).

Met45 contacts substrate. The ATP site is built by Arg121 and Thr168. Gly195 contacts substrate.

It belongs to the Thz kinase family. Mg(2+) is required as a cofactor.

It carries out the reaction 5-(2-hydroxyethyl)-4-methylthiazole + ATP = 4-methyl-5-(2-phosphooxyethyl)-thiazole + ADP + H(+). It participates in cofactor biosynthesis; thiamine diphosphate biosynthesis; 4-methyl-5-(2-phosphoethyl)-thiazole from 5-(2-hydroxyethyl)-4-methylthiazole: step 1/1. Functionally, catalyzes the phosphorylation of the hydroxyl group of 4-methyl-5-beta-hydroxyethylthiazole (THZ). In Bacillus pumilus (strain SAFR-032), this protein is Hydroxyethylthiazole kinase.